Consider the following 179-residue polypeptide: MAPTSVNKIAVELSLQTDLTGSAMASSGVEELLTNPWQGWCQRWLEYLADCLPPASSYELTLLFTGDRRIQELNRKFRHQDKPTDVLAFAALEGDFPLIESEETEEPLYLGDIVISLERADHQARERGHSAKLEVVWLTAHGLLHLLGWDHPDEASLTTMLSEQSHLLTLIGQNPPLFT.

Zn(2+)-binding residues include His141, His145, and His151.

This sequence belongs to the endoribonuclease YbeY family. Zn(2+) is required as a cofactor.

The protein localises to the cytoplasm. Its function is as follows. Single strand-specific metallo-endoribonuclease involved in late-stage 70S ribosome quality control and in maturation of the 3' terminus of the 16S rRNA. The protein is Endoribonuclease YbeY of Synechocystis sp. (strain ATCC 27184 / PCC 6803 / Kazusa).